The chain runs to 208 residues: Uracil phosphoribosyltransferase (208 aa).

5-phospho-alpha-D-ribose 1-diphosphate contacts are provided by residues arginine 78, arginine 103, and 130–138 (DPMLATGGS). Uracil contacts are provided by residues isoleucine 193 and 198–200 (GDA). Aspartate 199 serves as a coordination point for 5-phospho-alpha-D-ribose 1-diphosphate.

The protein belongs to the UPRTase family. The cofactor is Mg(2+).

The enzyme catalyses UMP + diphosphate = 5-phospho-alpha-D-ribose 1-diphosphate + uracil. Its pathway is pyrimidine metabolism; UMP biosynthesis via salvage pathway; UMP from uracil: step 1/1. Its activity is regulated as follows. Allosterically activated by GTP. Catalyzes the conversion of uracil and 5-phospho-alpha-D-ribose 1-diphosphate (PRPP) to UMP and diphosphate. The sequence is that of Uracil phosphoribosyltransferase from Shewanella baltica (strain OS223).